The sequence spans 204 residues: Ancillary SecYEG translocon subunit (204 aa).

Residues 1–23 (MAYSIEEEQEINQLKDWWKENGK) lie on the Cytoplasmic side of the membrane. The helical transmembrane segment at 24 to 42 (TIIVAFILGVGGMFGWRYW) threads the bilayer. Residues 43–204 (QTHQAEQIAQ…QMAKMKLNNL (162 aa)) are Periplasmic-facing.

It belongs to the YfgM family. As to quaternary structure, interacts with the SecYEG translocon. Forms a complex with PpiD.

The protein localises to the cell inner membrane. Its function is as follows. May mediate protein transfer from the SecYEG translocon to the periplasmic chaperone network via its periplasmic C-terminal region. In Haemophilus influenzae (strain ATCC 51907 / DSM 11121 / KW20 / Rd), this protein is Ancillary SecYEG translocon subunit.